Reading from the N-terminus, the 335-residue chain is Anthranilate phosphoribosyltransferase (335 aa).

Residues glycine 82, 85 to 86 (GD), threonine 90, 92 to 95 (NIST), 110 to 118 (KHGGRSVSS), and serine 122 each bind 5-phospho-alpha-D-ribose 1-diphosphate. Position 82 (glycine 82) interacts with anthranilate. Residue serine 94 coordinates Mg(2+). Residue arginine 168 coordinates anthranilate. 2 residues coordinate Mg(2+): aspartate 226 and glutamate 227.

This sequence belongs to the anthranilate phosphoribosyltransferase family. In terms of assembly, homodimer. It depends on Mg(2+) as a cofactor.

It carries out the reaction N-(5-phospho-beta-D-ribosyl)anthranilate + diphosphate = 5-phospho-alpha-D-ribose 1-diphosphate + anthranilate. It functions in the pathway amino-acid biosynthesis; L-tryptophan biosynthesis; L-tryptophan from chorismate: step 2/5. Catalyzes the transfer of the phosphoribosyl group of 5-phosphorylribose-1-pyrophosphate (PRPP) to anthranilate to yield N-(5'-phosphoribosyl)-anthranilate (PRA). This is Anthranilate phosphoribosyltransferase from Francisella philomiragia subsp. philomiragia (strain ATCC 25017 / CCUG 19701 / FSC 153 / O#319-036).